The chain runs to 405 residues: Riboflavin biosynthesis protein RibBA (405 aa).

Residues M1–K205 form a DHBP synthase region. Residues R30–E31, D35, R144–T148, and E168 each bind D-ribulose 5-phosphate. E31 contacts Mg(2+). Mg(2+) is bound at residue H147. Positions Q206–K405 are GTP cyclohydrolase II. R256–S260 lines the GTP pocket. The Zn(2+) site is built by C261, C272, and C274. Residues Q277, E299 to R301, and T321 each bind GTP. The active-site Proton acceptor; for GTP cyclohydrolase activity is the D333. The active-site Nucleophile; for GTP cyclohydrolase activity is the R335. Positions 356 and 361 each coordinate GTP.

This sequence in the N-terminal section; belongs to the DHBP synthase family. It in the C-terminal section; belongs to the GTP cyclohydrolase II family. It depends on Mg(2+) as a cofactor. Requires Mn(2+) as cofactor. The cofactor is Zn(2+).

The catalysed reaction is D-ribulose 5-phosphate = (2S)-2-hydroxy-3-oxobutyl phosphate + formate + H(+). The enzyme catalyses GTP + 4 H2O = 2,5-diamino-6-hydroxy-4-(5-phosphoribosylamino)-pyrimidine + formate + 2 phosphate + 3 H(+). Its pathway is cofactor biosynthesis; riboflavin biosynthesis; 2-hydroxy-3-oxobutyl phosphate from D-ribulose 5-phosphate: step 1/1. It functions in the pathway cofactor biosynthesis; riboflavin biosynthesis; 5-amino-6-(D-ribitylamino)uracil from GTP: step 1/4. Catalyzes the conversion of D-ribulose 5-phosphate to formate and 3,4-dihydroxy-2-butanone 4-phosphate. Functionally, catalyzes the conversion of GTP to 2,5-diamino-6-ribosylamino-4(3H)-pyrimidinone 5'-phosphate (DARP), formate and pyrophosphate. The polypeptide is Riboflavin biosynthesis protein RibBA (Porphyromonas gingivalis (strain ATCC 33277 / DSM 20709 / CIP 103683 / JCM 12257 / NCTC 11834 / 2561)).